A 258-amino-acid chain; its full sequence is Flap endonuclease Xni (258 aa).

Residue Asp109 participates in Mg(2+) binding. Residues Val165–Leu254 enclose the 5'-3' exonuclease domain. 5 residues coordinate K(+): Leu176, Ala177, Pro185, Ile187, and Ile190. The segment at Gly189 to Ala194 is interaction with DNA.

It belongs to the Xni family. Mg(2+) is required as a cofactor. The cofactor is K(+).

Its function is as follows. Has flap endonuclease activity. During DNA replication, flap endonucleases cleave the 5'-overhanging flap structure that is generated by displacement synthesis when DNA polymerase encounters the 5'-end of a downstream Okazaki fragment. The sequence is that of Flap endonuclease Xni from Photobacterium profundum (strain SS9).